The sequence spans 429 residues: 3-phosphoshikimate 1-carboxyvinyltransferase (429 aa).

The 3-phosphoshikimate site is built by Lys-11, Ser-12, and Arg-16. Phosphoenolpyruvate is bound at residue Lys-11. Residues Gly-82 and Arg-110 each contribute to the phosphoenolpyruvate site. Residues Ser-155, Gln-157, Asp-302, and Lys-329 each contribute to the 3-phosphoshikimate site. Gln-157 lines the phosphoenolpyruvate pocket. Asp-302 acts as the Proton acceptor in catalysis. Residues Arg-333 and Arg-385 each coordinate phosphoenolpyruvate.

The protein belongs to the EPSP synthase family. Monomer.

The protein localises to the cytoplasm. It catalyses the reaction 3-phosphoshikimate + phosphoenolpyruvate = 5-O-(1-carboxyvinyl)-3-phosphoshikimate + phosphate. It functions in the pathway metabolic intermediate biosynthesis; chorismate biosynthesis; chorismate from D-erythrose 4-phosphate and phosphoenolpyruvate: step 6/7. Catalyzes the transfer of the enolpyruvyl moiety of phosphoenolpyruvate (PEP) to the 5-hydroxyl of shikimate-3-phosphate (S3P) to produce enolpyruvyl shikimate-3-phosphate and inorganic phosphate. The sequence is that of 3-phosphoshikimate 1-carboxyvinyltransferase from Helicobacter pylori (strain G27).